A 273-amino-acid polypeptide reads, in one-letter code: Formamidopyrimidine-DNA glycosylase (273 aa).

Residue P2 is the Schiff-base intermediate with DNA of the active site. The active-site Proton donor is the E3. Catalysis depends on K58, which acts as the Proton donor; for beta-elimination activity. Residues H91, R110, and R153 each contribute to the DNA site. An FPG-type zinc finger spans residues 238–272; it reads KVYGKEGQPCPRCGEDFVKIKICGRGTTYCLHCQK. Residue R262 is the Proton donor; for delta-elimination activity of the active site.

Belongs to the FPG family. In terms of assembly, monomer. It depends on Zn(2+) as a cofactor.

The enzyme catalyses Hydrolysis of DNA containing ring-opened 7-methylguanine residues, releasing 2,6-diamino-4-hydroxy-5-(N-methyl)formamidopyrimidine.. The catalysed reaction is 2'-deoxyribonucleotide-(2'-deoxyribose 5'-phosphate)-2'-deoxyribonucleotide-DNA = a 3'-end 2'-deoxyribonucleotide-(2,3-dehydro-2,3-deoxyribose 5'-phosphate)-DNA + a 5'-end 5'-phospho-2'-deoxyribonucleoside-DNA + H(+). Functionally, involved in base excision repair of DNA damaged by oxidation or by mutagenic agents. Acts as a DNA glycosylase that recognizes and removes damaged bases. Has a preference for oxidized purines, such as 7,8-dihydro-8-oxoguanine (8-oxoG). Has AP (apurinic/apyrimidinic) lyase activity and introduces nicks in the DNA strand. Cleaves the DNA backbone by beta-delta elimination to generate a single-strand break at the site of the removed base with both 3'- and 5'-phosphates. The polypeptide is Formamidopyrimidine-DNA glycosylase (Lactobacillus delbrueckii subsp. bulgaricus (strain ATCC BAA-365 / Lb-18)).